The chain runs to 308 residues: D-alanine--D-alanine ligase (308 aa).

An ATP-grasp domain is found at 102–302 (KKVAAAAGIP…FGDLVSWMVE (201 aa)). An ATP-binding site is contributed by 128-183 (PLQPPYVVKPVREGSSFGVVIVKEDQSHPPQILTSSEWPFGNQVMVERYIHGRELT). 3 residues coordinate Mg(2+): aspartate 252, glutamate 269, and asparagine 271.

Belongs to the D-alanine--D-alanine ligase family. Requires Mg(2+) as cofactor. The cofactor is Mn(2+).

The protein localises to the cytoplasm. It catalyses the reaction 2 D-alanine + ATP = D-alanyl-D-alanine + ADP + phosphate + H(+). Its pathway is cell wall biogenesis; peptidoglycan biosynthesis. Its function is as follows. Cell wall formation. This chain is D-alanine--D-alanine ligase, found in Agrobacterium fabrum (strain C58 / ATCC 33970) (Agrobacterium tumefaciens (strain C58)).